We begin with the raw amino-acid sequence, 358 residues long: DnaJ homolog subfamily B member 11 (358 aa).

The first 22 residues, 1 to 22, serve as a signal peptide directing secretion; that stretch reads MAPQNLGTLCLLLLYLLGAAIA. The 66-residue stretch at 25 to 90 folds into the J domain; that stretch reads DFYKILGVPR…EKRKQYDTYG (66 aa). Threonine 188 is modified (phosphothreonine). Asparagine 261 carries N-linked (GlcNAc...) asparagine glycosylation.

As to quaternary structure, part of a large chaperone multiprotein complex comprising DNAJB11, HSP90B1, HSPA5, HYOU, PDIA2, PDIA4, PDIA6, PPIB, SDF2L1, UGGT1 and very small amounts of ERP29, but not, or at very low levels, CALR nor CANX. Binds to denatured substrates in an ATP-independent manner. Interacts via the J domain with HSPA5 in an ATP-dependent manner. Post-translationally, contains high-mannose Endo H-sensitive carbohydrates. In terms of processing, cys-169, Cys-171, Cys-193 and Cys-196 form intramolecular disulfide bonds. The preferential partner for each Cys is not known. In terms of tissue distribution, pancreas.

Its subcellular location is the endoplasmic reticulum lumen. Functionally, as a co-chaperone for HSPA5 it is required for proper folding, trafficking or degradation of proteins. Binds directly to both unfolded proteins that are substrates for ERAD and nascent unfolded peptide chains, but dissociates from the HSPA5-unfolded protein complex before folding is completed. May help recruiting HSPA5 and other chaperones to the substrate. Stimulates HSPA5 ATPase activity. It is necessary for maturation and correct trafficking of PKD1. The chain is DnaJ homolog subfamily B member 11 (DNAJB11) from Canis lupus familiaris (Dog).